Reading from the N-terminus, the 370-residue chain is MKINNSLLNFVNGMLVTLPSSKTLTLSWNFGSMLGMVLIFQILTGTFLAFYYTPDSLMAFSTVQYIMYEVNFGWVFRIFHFNGASLFFIFLYLHIFKGLFFMSYRLKKVWMSGLTIYLLVMMEAFMGYVLVWAQMSFWAAVVITSLLSVIPIWGPTIVTWIWSGFGVTGATLKFFFVLHFLLPWAILVIVLGHLIFLHSTGSTSSLYCHGDYDKVCFSPEYLGKDAYNIVIWLLFIVLSLIYPFNLGDAEMFIEADPMMSPVHIVPEWYFLFAYAILRAIPNKVLGVIALLMSIVTFYFFALVNNYTSCLTKLNKFLVFMFIISSTILSWLGQCTVEDPFTILSPLFSFIYFGLAYLMLFIFMSSKLLFK.

A run of 4 helical transmembrane segments spans residues 30-50, 74-96, 109-129, and 175-195; these read FGSM…FLAF, WVFR…LHIF, VWMS…MGYV, and FFVL…GHLI. Positions 80 and 94 each coordinate heme b. The heme b site is built by H179 and H193. An a ubiquinone-binding site is contributed by H198. A run of 4 helical transmembrane segments spans residues 221–240, 284–304, 316–336, and 342–362; these read YLGK…VLSL, VLGV…ALVN, FLVF…QCTV, and ILSP…LFIF.

Belongs to the cytochrome b family. The main subunits of complex b-c1 are: cytochrome b, cytochrome c1 and the Rieske protein. The cofactor is heme b.

The protein localises to the mitochondrion inner membrane. Component of the ubiquinol-cytochrome c reductase complex (complex III or cytochrome b-c1 complex) that is part of the mitochondrial respiratory chain. The b-c1 complex mediates electron transfer from ubiquinol to cytochrome c. Contributes to the generation of a proton gradient across the mitochondrial membrane that is then used for ATP synthesis. This chain is Cytochrome b, found in Caenorhabditis elegans.